The following is an 85-amino-acid chain: Cysteine-rich venom protein 1 (85 aa).

Residues Met-1 to Ala-21 form the signal peptide. Cystine bridges form between Cys-29–Cys-63, Cys-38–Cys-59, Cys-42–Cys-53, Cys-46–Cys-84, and Cys-65–Cys-78. A TIL domain is found at Cys-29–Cys-84.

This sequence belongs to the serine protease inhibitor-like (TIL domain-containing) family. As to expression, expressed by the venom gland.

The protein resides in the secreted. In terms of biological role, may be a phenoloxidase inhibitor that stabilizes or inhibits venom phenoloxidase while it is stored in the venom sac. The polypeptide is Cysteine-rich venom protein 1 (Pimpla hypochondriaca (Parasitoid wasp)).